The chain runs to 211 residues: ATP phosphoribosyltransferase (211 aa).

Belongs to the ATP phosphoribosyltransferase family. Short subfamily. In terms of assembly, heteromultimer composed of HisG and HisZ subunits.

It localises to the cytoplasm. The catalysed reaction is 1-(5-phospho-beta-D-ribosyl)-ATP + diphosphate = 5-phospho-alpha-D-ribose 1-diphosphate + ATP. It functions in the pathway amino-acid biosynthesis; L-histidine biosynthesis; L-histidine from 5-phospho-alpha-D-ribose 1-diphosphate: step 1/9. Catalyzes the condensation of ATP and 5-phosphoribose 1-diphosphate to form N'-(5'-phosphoribosyl)-ATP (PR-ATP). Has a crucial role in the pathway because the rate of histidine biosynthesis seems to be controlled primarily by regulation of HisG enzymatic activity. The chain is ATP phosphoribosyltransferase from Clostridium botulinum (strain 657 / Type Ba4).